The sequence spans 166 residues: Protein-export protein SecB (166 aa).

It belongs to the SecB family. In terms of assembly, homotetramer, a dimer of dimers. One homotetramer interacts with 1 SecA dimer.

Its subcellular location is the cytoplasm. In terms of biological role, one of the proteins required for the normal export of preproteins out of the cell cytoplasm. It is a molecular chaperone that binds to a subset of precursor proteins, maintaining them in a translocation-competent state. It also specifically binds to its receptor SecA. The polypeptide is Protein-export protein SecB (Cereibacter sphaeroides (strain ATCC 17025 / ATH 2.4.3) (Rhodobacter sphaeroides)).